The sequence spans 331 residues: Glucokinase (331 aa).

13 to 18 (GDIGGT) provides a ligand contact to ATP.

This sequence belongs to the bacterial glucokinase family.

Its subcellular location is the cytoplasm. The enzyme catalyses D-glucose + ATP = D-glucose 6-phosphate + ADP + H(+). The protein is Glucokinase of Caulobacter vibrioides (strain ATCC 19089 / CIP 103742 / CB 15) (Caulobacter crescentus).